The primary structure comprises 1073 residues: Error-prone DNA polymerase (1073 aa).

The disordered stretch occupies residues 41–73 (EAEPECLSTPRPGPGSTEVPGERRGSRQGERSG). Residues 60 to 73 (PGERRGSRQGERSG) show a composition bias toward basic and acidic residues.

The protein belongs to the DNA polymerase type-C family. DnaE2 subfamily.

The protein localises to the cytoplasm. The catalysed reaction is DNA(n) + a 2'-deoxyribonucleoside 5'-triphosphate = DNA(n+1) + diphosphate. Its function is as follows. DNA polymerase involved in damage-induced mutagenesis and translesion synthesis (TLS). It is not the major replicative DNA polymerase. This Corynebacterium efficiens (strain DSM 44549 / YS-314 / AJ 12310 / JCM 11189 / NBRC 100395) protein is Error-prone DNA polymerase.